Reading from the N-terminus, the 54-residue chain is Ovomucoid (54 aa).

The 51-residue stretch at 4–54 (VDCSGYPQSACPQDYVPFCGSDNKTYSNKCNFCNAVADSNGTLTLSHFGKC) folds into the Kazal-like domain. Intrachain disulfides connect cysteine 6–cysteine 36, cysteine 14–cysteine 33, and cysteine 22–cysteine 54. Asparagine 43 is a glycosylation site (N-linked (GlcNAc...) asparagine).

It localises to the secreted. The sequence is that of Ovomucoid from Gallirallus australis (Weka).